A 291-amino-acid polypeptide reads, in one-letter code: N-acetylmannosamine kinase (291 aa).

ATP-binding positions include 5 to 12 and 132 to 139; these read AIDIGGTK and GVGGGVVS. Residues H156, C166, C168, and C173 each coordinate Zn(2+).

The protein belongs to the ROK (NagC/XylR) family. NanK subfamily. As to quaternary structure, homodimer.

It carries out the reaction an N-acyl-D-mannosamine + ATP = an N-acyl-D-mannosamine 6-phosphate + ADP + H(+). It participates in amino-sugar metabolism; N-acetylneuraminate degradation; D-fructose 6-phosphate from N-acetylneuraminate: step 2/5. Functionally, catalyzes the phosphorylation of N-acetylmannosamine (ManNAc) to ManNAc-6-P. The polypeptide is N-acetylmannosamine kinase (Escherichia coli O6:K15:H31 (strain 536 / UPEC)).